The sequence spans 287 residues: Alpha-tubulin N-acetyltransferase 2 (287 aa).

One can recognise an N-acetyltransferase domain in the interval 2–193 (VEFAFDIKHL…NNFVLYEGFF (192 aa)). Residues 127 to 140 (FYVH…GQGK) and 163 to 172 (SNKMLAFMAK) each bind acetyl-CoA.

It belongs to the acetyltransferase ATAT1 family.

It localises to the midbody. It is found in the midbody ring. It carries out the reaction L-lysyl-[alpha-tubulin] + acetyl-CoA = N(6)-acetyl-L-lysyl-[alpha-tubulin] + CoA + H(+). Functionally, specifically acetylates 'Lys-40' in alpha-tubulin on the lumenal side of microtubules. Promotes microtubule destabilization and accelerates microtubule dynamics; this activity may be independent of acetylation activity. Acetylates alpha-tubulin with a slow enzymatic rate, due to a catalytic site that is not optimized for acetyl transfer. Enters the microtubule through each end and diffuses quickly throughout the lumen of microtubules. Acetylates only long/old microtubules because of its slow acetylation rate since it does not have time to act on dynamically unstable microtubules before the enzyme is released. Main acetyltransferase responsible for alpha-tubulin 'Lys-40' acetylation in germline cells during the early stages of oogenesis. Required for normal egg chamber separation. This chain is Alpha-tubulin N-acetyltransferase 2, found in Drosophila melanogaster (Fruit fly).